The primary structure comprises 328 residues: uncharacterized protein (328 aa).

To the C-terminal of para-aminobenzoate synthase component I.

This is an uncharacterized protein from Haemophilus influenzae (strain ATCC 51907 / DSM 11121 / KW20 / Rd).